Reading from the N-terminus, the 742-residue chain is Synaptic vesicle glycoprotein 2A (742 aa).

The segment at 1 to 57 (MEEGFRDRAAFIRGAKDIAKEVKKHAAKKVVKGLDRVQDEYSRRSYSRFEEEEDDDD) is interaction with SYT1. Topologically, residues 1 to 169 (MEEGFRDRAA…GHGRFQWTLY (169 aa)) are cytoplasmic. A compositionally biased stretch (basic and acidic residues) spans 40–49 (EYSRRSYSRF). The tract at residues 40–145 (EYSRRSYSRF…RGEAQRRKDR (106 aa)) is disordered. Phosphoserine is present on residues serine 80 and serine 81. The residue at position 84 (threonine 84) is a Phosphothreonine. Over residues 122–137 (VRGGLSDGEGPPGGRG) the composition is skewed to gly residues. At serine 127 the chain carries Phosphoserine. The helical transmembrane segment at 170–190 (FVLGLALMADGVEVFVVGFVL) threads the bilayer. The Extracellular segment spans residues 191-205 (PSAEKDMCLSDSNKG). The chain crosses the membrane as a helical span at residues 206–226 (MLGLIVYLGMMVGAFLWGGLA). Topologically, residues 227–233 (DRLGRRQ) are cytoplasmic. The helical transmembrane segment at 234 to 254 (CLLISLSVNSVFAFFSSFVQG) threads the bilayer. The Extracellular portion of the chain corresponds to 255–262 (YGTFLFCR). Residues 263–283 (LLSGVGIGGSIPIVFSYFSEF) form a helical membrane-spanning segment. The Cytoplasmic portion of the chain corresponds to 284–294 (LAQEKRGEHLS). The chain crosses the membrane as a helical span at residues 295-315 (WLCMFWMIGGVYAAAMAWAII). Over 316–334 (PHYGWSFQMGSAYQFHSWR) the chain is Extracellular. A helical transmembrane segment spans residues 335–355 (VFVLVCAFPSVFAIGALTTQP). Residues 356-447 (ESPRFFLENG…CFSPEYRRIT (92 aa)) are Cytoplasmic-facing. The residue at position 393 (serine 393) is a Phosphoserine. The chain crosses the membrane as a helical span at residues 448 to 468 (LMMMGVWFTMSFSYYGLTVWF). Topologically, residues 469 to 598 (PDMIRHLQAV…GTGEGAYMVY (130 aa)) are extracellular. Tyrosine 480 is modified (phosphotyrosine). Residues asparagine 498 and asparagine 548 are each glycosylated (N-linked (GlcNAc...) asparagine). An N-linked (GlcNAc...) asparagine; alternate glycan is attached at asparagine 573. A glycan (N-linked (HexNAc...) asparagine; alternate) is linked at asparagine 573. The chain crosses the membrane as a helical span at residues 599–619 (FVSFLGTLAVLPGNIVSALLM). At 620–626 (DKIGRLR) the chain is on the cytoplasmic side. A helical membrane pass occupies residues 627-647 (MLAGSSVLSCVSCFFLSFGNS). At 648-651 (ESAM) the chain is on the extracellular side. A helical transmembrane segment spans residues 652–672 (IALLCLFGGVSIASWNALDVL). Over 673 to 685 (TVELYPSDKRTTA) the chain is Cytoplasmic. Residues 686 to 708 (FGFLNALCKLAAVLGISIFTSFV) traverse the membrane as a helical segment. Residues 709–712 (GITK) are Extracellular-facing. A helical transmembrane segment spans residues 713–731 (AAPILFASAALALGSSLAL). Topologically, residues 732–742 (KLPETRGQVLQ) are cytoplasmic.

Belongs to the major facilitator superfamily. Interacts with SYT1/synaptotagmin-1 in a calcium-dependent manner. Binds the adapter protein complex AP-2. In terms of assembly, (Microbial infection) Interacts with C.botulinum neurotoxin type A1 and type A2 (BoNT/A, botA). Interaction is improved by glycosylation of SV2. As to quaternary structure, (Microbial infection) Copurifies with C.botulinum neurotoxin type B (BoNT/B, botB) and synaptotagmin 1 (SYT1). Interaction does not require glycosylation of SV2 or SYT1 proteins. Another group finds only copurification with SYT1 and SYT2. (Microbial infection) Interacts with C.botulinum neurotoxin type E (BoNT/E). Interaction requires glycosylation of SV2 proteins. In terms of assembly, (Microbial infection) Copurifies with C.botulinum neurotoxin type F (BoNT/F) and synaptotagmin 1 (SYT2). Another group finds only copurification with BoNT/F. Interaction requires SV2 glycosylation. Phosphorylation by CK1 of the N-terminal cytoplasmic domain regulates interaction with SYT1. In terms of processing, N-glycosylated, on at least 3 residues. Widely expressed throughout the brain (at protein level). Expressed by neural and endocrine cells of brain and spinal cord.

It is found in the presynapse. The protein resides in the cytoplasmic vesicle. Its subcellular location is the secretory vesicle. It localises to the synaptic vesicle membrane. Its function is as follows. Plays a role in the control of regulated secretion in neural and endocrine cells, enhancing selectively low-frequency neurotransmission. Positively regulates vesicle fusion by maintaining the readily releasable pool of secretory vesicles. (Microbial infection) Receptor for C.botulinum neurotoxin type A (BoNT/A, botA); the toxin binds via extracellular loop 4. Restores uptake of BoNT/A in mouse cells that are deleted for SV2 receptor. Glycosylation of Asn-573 is not essential for receptor activity, but enhances uptake. Also serves as a receptor for the closely related C.botulinum neurotoxin type A2; glycosylation is not essential but enhances the interaction. Functionally, possible receptor for C.botulinum neurotoxin type D (BoNT/D, botD); BoNT/D does not bind to extracellular loop 4 as do BoNT/A and BoNT/E, nor to loop 1 or loop 3. Another group does not find a convincing interaction with SV2. In terms of biological role, (Microbial infection) Receptor for C.botulinum neurotoxin type E (BoNT/E); the toxin probably binds via extracellular loop 4 and requires glycosylation of Asn-573. Restores uptake of BoNT/E in mouse cells that are deleted for SV2 receptor. Its function is as follows. (Microbial infection) Receptor for C.botulinum neurotoxin type F (BoNT/F). Binding requires glycosylation of Asn-573. This Rattus norvegicus (Rat) protein is Synaptic vesicle glycoprotein 2A (Sv2a).